The primary structure comprises 235 residues: Urease accessory protein UreF (235 aa).

This sequence belongs to the UreF family. As to quaternary structure, ureD, UreF and UreG form a complex that acts as a GTP-hydrolysis-dependent molecular chaperone, activating the urease apoprotein by helping to assemble the nickel containing metallocenter of UreC. The UreE protein probably delivers the nickel.

The protein resides in the cytoplasm. Required for maturation of urease via the functional incorporation of the urease nickel metallocenter. In Haemophilus influenzae (strain 86-028NP), this protein is Urease accessory protein UreF.